The primary structure comprises 540 residues: Chaperonin GroEL (540 aa).

Residues 30 to 33 (TLGP), Lys-51, 87 to 91 (DGTTT), Gly-415, and Asp-496 each bind ATP.

Belongs to the chaperonin (HSP60) family. As to quaternary structure, forms a cylinder of 14 subunits composed of two heptameric rings stacked back-to-back. Interacts with the co-chaperonin GroES.

The protein resides in the cytoplasm. It carries out the reaction ATP + H2O + a folded polypeptide = ADP + phosphate + an unfolded polypeptide.. Its function is as follows. Together with its co-chaperonin GroES, plays an essential role in assisting protein folding. The GroEL-GroES system forms a nano-cage that allows encapsulation of the non-native substrate proteins and provides a physical environment optimized to promote and accelerate protein folding. The polypeptide is Chaperonin GroEL (Thermodesulfovibrio yellowstonii (strain ATCC 51303 / DSM 11347 / YP87)).